A 631-amino-acid chain; its full sequence is 1-deoxy-D-xylulose-5-phosphate synthase (631 aa).

Thiamine diphosphate contacts are provided by residues histidine 87 and 128–130 (GHS). Aspartate 159 contacts Mg(2+). Thiamine diphosphate is bound by residues 160-161 (GA), asparagine 188, phenylalanine 295, and glutamate 377. Asparagine 188 lines the Mg(2+) pocket.

Belongs to the transketolase family. DXPS subfamily. As to quaternary structure, homodimer. Mg(2+) serves as cofactor. Thiamine diphosphate is required as a cofactor.

The enzyme catalyses D-glyceraldehyde 3-phosphate + pyruvate + H(+) = 1-deoxy-D-xylulose 5-phosphate + CO2. Its pathway is metabolic intermediate biosynthesis; 1-deoxy-D-xylulose 5-phosphate biosynthesis; 1-deoxy-D-xylulose 5-phosphate from D-glyceraldehyde 3-phosphate and pyruvate: step 1/1. Its function is as follows. Catalyzes the acyloin condensation reaction between C atoms 2 and 3 of pyruvate and glyceraldehyde 3-phosphate to yield 1-deoxy-D-xylulose-5-phosphate (DXP). This chain is 1-deoxy-D-xylulose-5-phosphate synthase, found in Pseudomonas putida (strain W619).